Consider the following 325-residue polypeptide: MDKSSGELVTLTPNNNNTVQPVALMRLGVFVPTLKSLKNSKKNTLSRTDATEELTRLSLARAEGFDKVEITGPRLDMDNDFKTWVGIIHSFARHNVIGDKVELPFVEFAKLCGIPSSQSSRRLRERISPSLKRIAGTVISFSRTDEKHTREYITHLVQSAYYDTERDIVQLQADPRLFELYQFDRKVLLQLKAINALKRRESAQALYTFIESLPRDPAPISLARLRARLNLKSPVFSQNQTVRRAMEQLREIGYLDYTEIQRGRTKLFCIHYRRPRLKAPNDESKENPLPPSPAEKVSPEMAEKLALLEKLGITLDDLEKLFKSR.

Residues 279-298 (APNDESKENPLPPSPAEKVS) form a disordered region.

It belongs to the initiator RepB protein family.

This protein is essential for plasmid replication; it is involved in copy control functions. In vitro, binds to the DNA repeat units, BCDD'D'', EFG and HIJ. This chain is RepFIB replication protein A (repA), found in Escherichia coli.